The following is a 1079-amino-acid chain: Electrogenic sodium bicarbonate cotransporter 1 (1079 aa).

Residues 1–62 form a required for interaction with AHCYL1 region; that stretch reads MEDEAALDRG…EKKEKERVSE (62 aa). Residues 1 to 466 lie on the Cytoplasmic side of the membrane; the sequence is MEDEAALDRG…FASDFYDALN (466 aa). Y30 is subject to Phosphotyrosine. Residues 39-52 show a composition bias toward basic residues; the sequence is YRRRRRHKRKAGHR. A disordered region spans residues 39–78; that stretch reads YRRRRRHKRKAGHREKKEKERVSENYSDKSDVENADESSS. The segment covering 53-70 has biased composition (basic and acidic residues); it reads EKKEKERVSENYSDKSDV. Phosphoserine occurs at positions 61, 65, 68, 223, 232, 233, and 245. A disordered region spans residues 238-265; it reads FTSPENGSPAMTHRNLTSSSLNDISDKP. Phosphothreonine is present on residues T249 and T254. Polar residues predominate over residues 251–260; it reads RNLTSSSLND. Phosphoserine occurs at positions 256, 257, and 262. The helical transmembrane segment at 467–491 threads the bilayer; the sequence is IQALSAILFIYLATVTNAITFGGLL. Residues 492–501 are Extracellular-facing; sequence GDATDNMQGV. A helical membrane pass occupies residues 502-520; the sequence is LESFLGTAVSGAVFCLFAG. A topological domain (cytoplasmic) is located at residue Q521. Residues 522-542 form a discontinuously helical membrane-spanning segment; sequence PLTILSSTGPVLVFERLLFNF. Residues 543–550 are Extracellular-facing; sequence SKDHNFDY. Residues 551 to 571 form a helical membrane-spanning segment; sequence LEFRLWIGLWSAFLCLILVAT. At 572–585 the chain is on the cytoplasmic side; that stretch reads DASFLVQYFTRFTE. Residues 586–609 traverse the membrane as a helical segment; it reads EGFSSLISFIFIYDAFKKMIKLAD. Topologically, residues 610-692 are extracellular; sequence YYPINSNFKV…GNNCDFVPDI (83 aa). The helical transmembrane segment at 693–710 threads the bilayer; sequence TLMSFILFLGTYTSSMAL. At 711 to 725 the chain is on the cytoplasmic side; sequence KKFKTSRYFPTTARK. Residues 726–745 traverse the membrane as a helical segment; that stretch reads LISDFAIILSILIFCVIDAL. Topologically, residues 746–779 are extracellular; sequence VGVDTPKLIVPSEFKPTSPNRGWFVPPFGGNPWW. Residues 748-779 are interaction with CA4; that stretch reads VDTPKLIVPSEFKPTSPNRGWFVPPFGGNPWW. A helical membrane pass occupies residues 780–807; sequence VYLAAAIPALLVTILIFMDQQITAVIVN. Topologically, residues 808-819 are cytoplasmic; that stretch reads RKEHKLKKGAGY. Residues 820–836 form a helical membrane-spanning segment; that stretch reads HLDLFWVAILMVVCSFM. Residue A837 is a topological domain, extracellular. A discontinuously helical transmembrane segment spans residues 838 to 855; sequence LPWYVAATVISIAHIDSL. Topologically, residues 856 to 877 are cytoplasmic; the sequence is KMETETSAPGEQPKFLGVREQR. The chain crosses the membrane as a helical span at residues 878–894; sequence VTGTLVFILTGLSVFMA. The Extracellular portion of the chain corresponds to 895-901; the sequence is PILKFIP. Residues 902-918 traverse the membrane as a helical segment; that stretch reads MPVLYGVFLYMGVASLN. The Cytoplasmic portion of the chain corresponds to 919-960; the sequence is GVQFMDRLKLLLMPLKHQPDFIYLRHVPLRRVHLFTFLQVLC. Residues 961 to 986 constitute an intramembrane region (discontinuously helical); it reads LALLWILKSTVAAIIFPVMILALVAV. Residues 987-1079 lie on the Cytoplasmic side of the membrane; it reads RKGMDYLFSQ…PTFLERHTSC (93 aa). A CA2-binding region spans residues 1002 to 1004; the sequence is LDD. Positions 1012–1079 are disordered; the sequence is KKKEDEKKKK…PTFLERHTSC (68 aa). At S1026 the chain carries Phosphoserine; by PKA. S1029 is subject to Phosphoserine. A CA2-binding region spans residues 1030–1033; it reads DSDD. S1034 and S1044 each carry phosphoserine. A required for basolateral targeting region spans residues 1057 to 1059; that stretch reads FLS. Positions 1062 to 1079 are enriched in basic and acidic residues; sequence KPSDRERSPTFLERHTSC. Phosphoserine is present on S1069.

This sequence belongs to the anion exchanger (TC 2.A.31) family. Homodimer. Interacts with CA2/carbonic anhydrase 2 and CA4/carbonic anhydrase 4 which may regulate transporter activity. Isoform 1 but not isoform 2 interacts with AHCYL1 (via PEST domain when phosphorylated); the interaction increases SLC4A4 isoform 1 activity. Interacts with AHCYL2. Post-translationally, phosphorylation of Ser-1026 by PKA increases the binding of CA2 and changes the Na(+):HCO3(-) stoichiometry of the transporter from 3:1 to 2:1. Phosphorylated in presence of STK39 and dephosphorylated in presence of PP1 phosphatase; phosphorylation seems to inhibit SLC4A4 activity. In terms of processing, N-glycosylated. May not be necessary for the transporter basic functions. As to expression, expressed in vas deferens epithelia (at protein level).

It localises to the basolateral cell membrane. It is found in the cell membrane. It carries out the reaction 2 hydrogencarbonate(out) + Na(+)(out) = 2 hydrogencarbonate(in) + Na(+)(in). The catalysed reaction is 3 hydrogencarbonate(out) + Na(+)(out) = 3 hydrogencarbonate(in) + Na(+)(in). Functionally, electrogenic sodium/bicarbonate cotransporter with a Na(+):HCO3(-) stoichiometry varying from 1:2 to 1:3. May regulate bicarbonate influx/efflux at the basolateral membrane of cells and regulate intracellular pH. In Sus scrofa (Pig), this protein is Electrogenic sodium bicarbonate cotransporter 1 (SLC4A4).